Reading from the N-terminus, the 576-residue chain is Low-affinity glucose transporter HXT4 (576 aa).

A disordered region spans residues Met1–Asn56. The Cytoplasmic portion of the chain corresponds to Met1 to Ser66. The segment covering Glu25 to Asn37 has biased composition (polar residues). Residues Lys38–Ser54 show a composition bias toward basic and acidic residues. Lys45 participates in a covalent cross-link: Glycyl lysine isopeptide (Lys-Gly) (interchain with G-Cter in ubiquitin). The helical transmembrane segment at Ala67–Trp87 threads the bilayer. Topologically, residues Asp88–Gly122 are extracellular. The chain crosses the membrane as a helical span at residues Leu123–Gly143. Residues Asp144 to Lys149 lie on the Cytoplasmic side of the membrane. A helical transmembrane segment spans residues Met150–Ile170. Over Asn171–Arg180 the chain is Extracellular. The chain crosses the membrane as a helical span at residues Ile181 to Val201. At Ser202–Arg207 the chain is on the cytoplasmic side. A helical membrane pass occupies residues Gly208–Thr228. Residues Asn229–Arg242 lie on the Extracellular side of the membrane. Residues Val243 to Pro263 form a helical membrane-spanning segment. At Glu264–Asp346 the chain is on the cytoplasmic side. The helical transmembrane segment at Asn347–Ser363 threads the bilayer. Residues Asp364–Ser369 lie on the Extracellular side of the membrane. A helical membrane pass occupies residues Ile370–Val387. Residues Glu388 to Arg394 lie on the Cytoplasmic side of the membrane. The chain crosses the membrane as a helical span at residues Cys395 to Val415. The Extracellular segment spans residues Thr416–Val437. N-linked (GlcNAc...) asparagine glycosylation occurs at Asn425. The helical transmembrane segment at Phe438–Asn458 threads the bilayer. The Cytoplasmic portion of the chain corresponds to Ser459–Gln475. A helical transmembrane segment spans residues Ala476 to Ile496. Residue Asp497 is a topological domain, extracellular. The chain crosses the membrane as a helical span at residues Phe498–Phe518. The Cytoplasmic segment spans residues Val519–Lys576.

It belongs to the major facilitator superfamily. Sugar transporter (TC 2.A.1.1) family.

The protein resides in the cell membrane. With respect to regulation, xylose uptake is strongly inhibited by glucose. Functionally, low-affinity glucose transporter. Can also transport xylose. In Saccharomyces cerevisiae (strain JAY291) (Baker's yeast), this protein is Low-affinity glucose transporter HXT4 (HXT4).